The primary structure comprises 122 residues: Large ribosomal subunit protein bL12 (122 aa).

It belongs to the bacterial ribosomal protein bL12 family. In terms of assembly, homodimer. Part of the ribosomal stalk of the 50S ribosomal subunit. Forms a multimeric L10(L12)X complex, where L10 forms an elongated spine to which 2 to 4 L12 dimers bind in a sequential fashion. Binds GTP-bound translation factors.

Functionally, forms part of the ribosomal stalk which helps the ribosome interact with GTP-bound translation factors. Is thus essential for accurate translation. In Streptococcus mutans serotype c (strain ATCC 700610 / UA159), this protein is Large ribosomal subunit protein bL12.